A 255-amino-acid polypeptide reads, in one-letter code: Small ribosomal subunit protein uS2 (255 aa).

The tract at residues 230 to 255 (QSSSGRDLGASSEVPVEPALEEAAEG) is disordered.

It belongs to the universal ribosomal protein uS2 family.

The sequence is that of Small ribosomal subunit protein uS2 from Rhizobium leguminosarum bv. trifolii (strain WSM2304).